The sequence spans 1081 residues: Carbamoyl phosphate synthase large chain (1081 aa).

Positions 1-403 (MPRRNDLNKI…SFQKALRSLE (403 aa)) are carboxyphosphate synthetic domain. ATP is bound by residues R129, R170, G177, K209, L211, E216, G242, V243, H244, Q286, and E300. The ATP-grasp 1 domain maps to 133-329 (KEAMARIGVP…IAKFAAKLAV (197 aa)). Positions 286, 300, and 302 each coordinate Mg(2+). Positions 286, 300, and 302 each coordinate Mn(2+). The oligomerization domain stretch occupies residues 404-553 (TGRFGFGCDR…STYEPEECEV (150 aa)). Residues 554-944 (LPSDKPKVMI…AFAKAELGAG (391 aa)) form a carbamoyl phosphate synthetic domain region. The region spanning 686-878 (EKILHELEIS…LAKIASLVMS (193 aa)) is the ATP-grasp 2 domain. 10 residues coordinate ATP: R722, K761, L763, E768, G794, I795, H796, S797, Q837, and E849. The Mg(2+) site is built by Q837, E849, and N851. Residues Q837, E849, and N851 each contribute to the Mn(2+) site. In terms of domain architecture, MGS-like spans 945 to 1081 (VILATTGTVF…DVKALQDYLG (137 aa)). The allosteric domain stretch occupies residues 945-1081 (VILATTGTVF…DVKALQDYLG (137 aa)).

This sequence belongs to the CarB family. Composed of two chains; the small (or glutamine) chain promotes the hydrolysis of glutamine to ammonia, which is used by the large (or ammonia) chain to synthesize carbamoyl phosphate. Tetramer of heterodimers (alpha,beta)4. It depends on Mg(2+) as a cofactor. The cofactor is Mn(2+).

It catalyses the reaction hydrogencarbonate + L-glutamine + 2 ATP + H2O = carbamoyl phosphate + L-glutamate + 2 ADP + phosphate + 2 H(+). The enzyme catalyses hydrogencarbonate + NH4(+) + 2 ATP = carbamoyl phosphate + 2 ADP + phosphate + 2 H(+). Its pathway is amino-acid biosynthesis; L-arginine biosynthesis; carbamoyl phosphate from bicarbonate: step 1/1. It functions in the pathway pyrimidine metabolism; UMP biosynthesis via de novo pathway; (S)-dihydroorotate from bicarbonate: step 1/3. Its function is as follows. Large subunit of the glutamine-dependent carbamoyl phosphate synthetase (CPSase). CPSase catalyzes the formation of carbamoyl phosphate from the ammonia moiety of glutamine, carbonate, and phosphate donated by ATP, constituting the first step of 2 biosynthetic pathways, one leading to arginine and/or urea and the other to pyrimidine nucleotides. The large subunit (synthetase) binds the substrates ammonia (free or transferred from glutamine from the small subunit), hydrogencarbonate and ATP and carries out an ATP-coupled ligase reaction, activating hydrogencarbonate by forming carboxy phosphate which reacts with ammonia to form carbamoyl phosphate. This is Carbamoyl phosphate synthase large chain from Synechocystis sp. (strain ATCC 27184 / PCC 6803 / Kazusa).